A 98-amino-acid polypeptide reads, in one-letter code: uncharacterized protein (98 aa).

This is an uncharacterized protein from Acidianus two-tailed virus (ATV).